Consider the following 487-residue polypeptide: L-tartrate/succinate antiporter (487 aa).

Helical transmembrane passes span 10–30 (YLAP…AGLE), 33–53 (TWLY…EPVP), 54–74 (GAVV…WLLF), 93–113 (WAVS…FMFG), 137–157 (TLFL…VTPS), 189–209 (IGSY…AIFL), 236–256 (FLGM…LAYV), 292–312 (LMVG…AAMV), 313–333 (GYSV…DIVS), 340–360 (VFFW…TGFI), 370–390 (SLSG…FYLL), 393–413 (FFAS…AAAL), 418–438 (IPLP…SILT), and 465–485 (IFGL…MPVV).

It belongs to the SLC13A/DASS transporter (TC 2.A.47) family. DIT1 subfamily.

Its subcellular location is the cell inner membrane. The catalysed reaction is (2R,3R)-tartrate(out) + succinate(in) = (2R,3R)-tartrate(in) + succinate(out). In terms of biological role, catalyzes the uptake of tartrate in exchange for intracellular succinate. Essential for anaerobic L-tartrate fermentation. This Escherichia coli O6:K15:H31 (strain 536 / UPEC) protein is L-tartrate/succinate antiporter (ttdT).